The following is a 200-amino-acid chain: NAD(P)H-dependent FMN reductase C4B3.06c (200 aa).

FMN-binding positions include Arg-22, 96–99 (QYNG), and Tyr-126.

In terms of assembly, homodimer.

It is found in the cytoplasm. It localises to the nucleus. The catalysed reaction is FMNH2 + NADP(+) = FMN + NADPH + 2 H(+). It carries out the reaction FMNH2 + NAD(+) = FMN + NADH + 2 H(+). Its function is as follows. Has several reductase activities that are NAD(P)H-dependent and involve FMN as a cofactor. May be involved in ferric iron assimilation. The sequence is that of NAD(P)H-dependent FMN reductase C4B3.06c from Schizosaccharomyces pombe (strain 972 / ATCC 24843) (Fission yeast).